The sequence spans 477 residues: Ubiquinone biosynthesis monooxygenase COQ6, mitochondrial (477 aa).

The transit peptide at 1–25 (MLGVLRIQGALASAGQARLLSVRLL) directs the protein to the mitochondrion.

This sequence belongs to the UbiH/COQ6 family. Component of a multi-subunit COQ enzyme complex. Requires FAD as cofactor.

It localises to the mitochondrion inner membrane. It catalyses the reaction a 4-hydroxy-3-(all-trans-polyprenyl)benzoate + 2 reduced [2Fe-2S]-[ferredoxin] + O2 + 2 H(+) = a 3,4-dihydroxy-5-(all-trans-polyprenyl)benzoate + 2 oxidized [2Fe-2S]-[ferredoxin] + H2O. It carries out the reaction a 2-methoxy-6-(all-trans-polyprenyl)phenol + 2 reduced [2Fe-2S]-[ferredoxin] + O2 + 2 H(+) = a 2-methoxy-6-(all-trans-polyprenyl)benzene-1,4-diol + 2 oxidized [2Fe-2S]-[ferredoxin] + H2O. Its pathway is cofactor biosynthesis; ubiquinone biosynthesis. FAD-dependent monooxygenase required for two non-consecutive steps during ubiquinone biosynthesis. Required for the C5-ring hydroxylation during ubiquinone biosynthesis by catalyzing the hydroxylation of 4-hydroxy-3-(all-trans-polyprenyl)benzoic acid to 3,4-dihydroxy-5-(all-trans-polyprenyl)benzoic acid. Also acts downstream of coq4, for the C1-hydroxylation during ubiquinone biosynthesis by catalyzing the hydroxylation of 2-methoxy-6-(all-trans-polyprenyl)phenol to 2-methoxy-6-(all-trans-polyprenyl)benzene-1,4-diol. The electrons required for the hydroxylation reaction are funneled indirectly to Coq6 from NADPH via a ferredoxin/ferredoxin reductase system. In Drosophila melanogaster (Fruit fly), this protein is Ubiquinone biosynthesis monooxygenase COQ6, mitochondrial.